The following is a 536-amino-acid chain: Lipid scramblase CLPTM1L (536 aa).

Residues 1–9 (MLSRSSFTS) lie on the Cytoplasmic side of the membrane. Residues 10 to 30 (LAVGVFAVYVAHTCWVMYGIV) form a helical membrane-spanning segment. Residues 31-284 (YTRPCPSGGA…VKGIFVDTNL (254 aa)) lie on the Extracellular side of the membrane. N-linked (GlcNAc...) asparagine glycosylation is found at N92, N102, and N229. Residues 285–305 (YFLALTFFVAAFHLLFDFLAF) traverse the membrane as a helical segment. The Cytoplasmic segment spans residues 306–324 (KNDISFWKKKRSMIGMSTK). The helical transmembrane segment at 325–342 (AVLWRCFSTVVIFLFLLD) threads the bilayer. The Extracellular segment spans residues 343 to 346 (EQTS). Residues 347 to 364 (LLVLIPAGIGAVIELWKV) form a helical membrane-spanning segment. Topologically, residues 365–402 (KKALKMTVKWQGIRPKVQFGASNDSEKKTEEYDTQAMK) are cytoplasmic. Residues 403–423 (YLSYLLYPLCIGGAAYSLLNV) form a helical membrane-spanning segment. The Extracellular segment spans residues 424 to 428 (KYKSW). The chain crosses the membrane as a helical span at residues 429–449 (YSWLINSFVNGVYAFGFLFML). Over 450–536 (PQLFVNYKMK…YEEKPKKKSS (87 aa)) the chain is Cytoplasmic.

This sequence belongs to the CLPTM1 family.

It is found in the endoplasmic reticulum membrane. The catalysed reaction is a 6-(alpha-D-glucosaminyl)-1-(1,2-diacyl-sn-glycero-3-phospho)-1D-myo-inositol(in) = a 6-(alpha-D-glucosaminyl)-1-(1,2-diacyl-sn-glycero-3-phospho)-1D-myo-inositol(out). It catalyses the reaction 6-(alpha-D-glucosaminyl)-(1-octadecanoyl,2-(9Z)-octadecenoyl-sn-glycero-3-phospho)-1D-myo-inositol(in) = 6-(alpha-D-glucosaminyl)-(1-octadecanoyl,2-(9Z)-octadecenoyl-sn-glycero-3-phospho)-1D-myo-inositol(out). It carries out the reaction a 1,2-diacyl-sn-glycero-3-phospho-(1D-myo-inositol)(in) = a 1,2-diacyl-sn-glycero-3-phospho-(1D-myo-inositol)(out). The enzyme catalyses a 1,2-diacyl-sn-glycero-3-phosphocholine(in) = a 1,2-diacyl-sn-glycero-3-phosphocholine(out). The catalysed reaction is a 1,2-diacyl-sn-glycero-3-phosphoethanolamine(in) = a 1,2-diacyl-sn-glycero-3-phosphoethanolamine(out). Functionally, scramblase that mediates the translocation of glucosaminylphosphatidylinositol (alpha-D-GlcN-(1-6)-(1,2-diacyl-sn-glycero-3-phospho)-1D-myo-inositol, GlcN-PI) across the endoplasmic reticulum (ER) membrane, from the cytosolic leaflet to the luminal leaflet of the ER membrane, where it participates in the biosynthesis of glycosylphosphatidylinositol (GPI). GPI is a lipid glycoconjugate involved in post-translational modification of proteins. Can also translocate 1,2-diacyl-sn-glycero-3-phospho-(1D-myo-inositol) (phosphatidylinositol or PI), as well as several other phospholipids (1,2-diacyl-sn-glycero-3-phosphocholine, 1,2-diacyl-sn-glycero-3-phosphoethanolamine), and N-acetylglucosaminylphosphatidylinositol (GlcNAc-PI) in vitro. The sequence is that of Lipid scramblase CLPTM1L (CLPTM1L) from Gallus gallus (Chicken).